The following is a 106-amino-acid chain: Tapetal oleosin GRP-19 (106 aa).

3 helical membrane-spanning segments follow: residues 14–34 (ALAL…ACII), 37–57 (PLFV…TLLA), and 58–78 (SGFT…SWLY). Residues 84–106 (RDLPKIPGLTPPAPASNPAGSGV) form a disordered region.

This sequence belongs to the oleosin family. Post-translationally, proteolytically cleaved following anther tapetal breakdown. As to expression, present in pollen (at protein level). Inflorescence-specific expression, especially in flowers florets.

It is found in the secreted. Its subcellular location is the extracellular space. The protein resides in the extracellular matrix. The protein localises to the pollen coat. It localises to the lipid droplet. It is found in the membrane. In terms of biological role, lipid-binding oleosin involved in anther tapetum development, especially for the physiology of tapetosomes. Also implicated in the formation of pollen coat. The sequence is that of Tapetal oleosin GRP-19 from Arabidopsis thaliana (Mouse-ear cress).